The primary structure comprises 459 residues: Glutamyl-tRNA reductase (459 aa).

Substrate-binding positions include 49 to 52 (TCNR), S109, 114 to 116 (ETQ), and Q120. Residue C50 is the Nucleophile of the active site. 189-194 (GAGKMG) is a binding site for NADP(+).

Belongs to the glutamyl-tRNA reductase family. Homodimer.

It catalyses the reaction (S)-4-amino-5-oxopentanoate + tRNA(Glu) + NADP(+) = L-glutamyl-tRNA(Glu) + NADPH + H(+). The protein operates within porphyrin-containing compound metabolism; protoporphyrin-IX biosynthesis; 5-aminolevulinate from L-glutamyl-tRNA(Glu): step 1/2. In terms of biological role, catalyzes the NADPH-dependent reduction of glutamyl-tRNA(Glu) to glutamate 1-semialdehyde (GSA). The chain is Glutamyl-tRNA reductase from Halalkalibacterium halodurans (strain ATCC BAA-125 / DSM 18197 / FERM 7344 / JCM 9153 / C-125) (Bacillus halodurans).